The primary structure comprises 323 residues: Acetylglutamate kinase (323 aa).

Substrate contacts are provided by residues 90–91 (GG), Arg112, and Asn218.

The protein belongs to the acetylglutamate kinase family. ArgB subfamily.

Its subcellular location is the cytoplasm. The catalysed reaction is N-acetyl-L-glutamate + ATP = N-acetyl-L-glutamyl 5-phosphate + ADP. It participates in amino-acid biosynthesis; L-arginine biosynthesis; N(2)-acetyl-L-ornithine from L-glutamate: step 2/4. In terms of biological role, catalyzes the ATP-dependent phosphorylation of N-acetyl-L-glutamate. This chain is Acetylglutamate kinase, found in Ehrlichia canis (strain Jake).